A 180-amino-acid chain; its full sequence is Large ribosomal subunit protein uL5 (180 aa).

This sequence belongs to the universal ribosomal protein uL5 family. In terms of assembly, part of the 50S ribosomal subunit; part of the 5S rRNA/L5/L18/L25 subcomplex. Contacts the 5S rRNA and the P site tRNA. Forms a bridge to the 30S subunit in the 70S ribosome.

In terms of biological role, this is one of the proteins that bind and probably mediate the attachment of the 5S RNA into the large ribosomal subunit, where it forms part of the central protuberance. In the 70S ribosome it contacts protein S13 of the 30S subunit (bridge B1b), connecting the 2 subunits; this bridge is implicated in subunit movement. Contacts the P site tRNA; the 5S rRNA and some of its associated proteins might help stabilize positioning of ribosome-bound tRNAs. The sequence is that of Large ribosomal subunit protein uL5 from Streptococcus sanguinis (strain SK36).